Consider the following 200-residue polypeptide: Troponin I-like protein (200 aa).

Disordered stretches follow at residues 1-20 (MGDE…AEVR) and 181-200 (ENKA…ENEE). Residues 2–116 (GDEEKRKMEE…EDAKYDLEYE (115 aa)) are a coiled coil.

This sequence belongs to the troponin I family. As to expression, expressed in salivary gland, gut, muscle and cuticle (at protein level).

Its function is as follows. Inhibits endothelial cell proliferation and angiogenesis in a vertebrate host. Probably required for efficient blood feeding on vertebrate hosts. This is Troponin I-like protein from Haemaphysalis longicornis (Bush tick).